The chain runs to 286 residues: NAD kinase (286 aa).

Asp-66 acts as the Proton acceptor in catalysis. Residues 66 to 67 (DG), 137 to 138 (ND), Arg-148, Arg-165, Asp-167, and 178 to 183 (TAYSMS) contribute to the NAD(+) site.

The protein belongs to the NAD kinase family. A divalent metal cation is required as a cofactor.

It localises to the cytoplasm. It catalyses the reaction NAD(+) + ATP = ADP + NADP(+) + H(+). Its function is as follows. Involved in the regulation of the intracellular balance of NAD and NADP, and is a key enzyme in the biosynthesis of NADP. Catalyzes specifically the phosphorylation on 2'-hydroxyl of the adenosine moiety of NAD to yield NADP. This is NAD kinase from Chlorobium chlorochromatii (strain CaD3).